Reading from the N-terminus, the 247-residue chain is MMNESQPKLKYKRILLKFSGEALMGKSQFGIDPSVLDSLARDIAELIHMGVEVGLVLGGGNLFRGKALSQAGVGRVTGDHMGMLATLMNALALRDALERIDLPARIMSAIPMLGVVDPYHRRKAITHLRNGQVVIFAAGTGNPFFTTDTAACLRAIEIGADIVLKATKVDGVYSADPLKNPDAKRYDYLTYKEVLTKGLEVMDSTAICLCQDQGMPLQVFDMAAPNALKRIVTGEQVGTIVGANHDQ.

17–20 (KFSG) serves as a coordination point for ATP. A UMP-binding site is contributed by Gly59. ATP is bound by residues Gly60 and Arg64. UMP-binding positions include Asp79 and 140–147 (TGNPFFTT). Thr167, Tyr173, and Asp176 together coordinate ATP.

Belongs to the UMP kinase family. In terms of assembly, homohexamer.

The protein resides in the cytoplasm. It catalyses the reaction UMP + ATP = UDP + ADP. The protein operates within pyrimidine metabolism; CTP biosynthesis via de novo pathway; UDP from UMP (UMPK route): step 1/1. Inhibited by UTP. In terms of biological role, catalyzes the reversible phosphorylation of UMP to UDP. This is Uridylate kinase from Legionella pneumophila (strain Paris).